Here is a 410-residue protein sequence, read N- to C-terminus: Argininosuccinate synthase (410 aa).

Residues 10–18 (AYSGGLDTS) and Ala-37 each bind ATP. Positions 90 and 95 each coordinate L-citrulline. Residue Gly-120 coordinates ATP. L-aspartate contacts are provided by Thr-122, Asn-126, and Asp-127. Residue Asn-126 coordinates L-citrulline. Positions 130, 182, 191, 267, and 279 each coordinate L-citrulline.

This sequence belongs to the argininosuccinate synthase family. Type 1 subfamily. In terms of assembly, homotetramer.

The protein resides in the cytoplasm. It carries out the reaction L-citrulline + L-aspartate + ATP = 2-(N(omega)-L-arginino)succinate + AMP + diphosphate + H(+). It participates in amino-acid biosynthesis; L-arginine biosynthesis; L-arginine from L-ornithine and carbamoyl phosphate: step 2/3. The protein is Argininosuccinate synthase of Polynucleobacter necessarius subsp. necessarius (strain STIR1).